The chain runs to 424 residues: Enolase (424 aa).

Gln163 contributes to the (2R)-2-phosphoglycerate binding site. Glu205 acts as the Proton donor in catalysis. Asp242, Glu285, and Asp312 together coordinate Mg(2+). 4 residues coordinate (2R)-2-phosphoglycerate: Lys337, Arg366, Ser367, and Lys388. Residue Lys337 is the Proton acceptor of the active site.

Belongs to the enolase family. Requires Mg(2+) as cofactor.

The protein resides in the cytoplasm. The protein localises to the secreted. Its subcellular location is the cell surface. The enzyme catalyses (2R)-2-phosphoglycerate = phosphoenolpyruvate + H2O. It functions in the pathway carbohydrate degradation; glycolysis; pyruvate from D-glyceraldehyde 3-phosphate: step 4/5. Catalyzes the reversible conversion of 2-phosphoglycerate (2-PG) into phosphoenolpyruvate (PEP). It is essential for the degradation of carbohydrates via glycolysis. In Sphingopyxis alaskensis (strain DSM 13593 / LMG 18877 / RB2256) (Sphingomonas alaskensis), this protein is Enolase.